Here is a 245-residue protein sequence, read N- to C-terminus: Probable 2-phosphosulfolactate phosphatase (245 aa).

The protein belongs to the ComB family. Requires Mg(2+) as cofactor.

The enzyme catalyses (2R)-O-phospho-3-sulfolactate + H2O = (2R)-3-sulfolactate + phosphate. The polypeptide is Probable 2-phosphosulfolactate phosphatase (Nostoc sp. (strain PCC 7120 / SAG 25.82 / UTEX 2576)).